The chain runs to 279 residues: MTQFDKQYNSIIKDIINNGISDEEFDVRTKWDSDGTPAHTLSVMSKQMRFDNSEVPILTTKKVAWKTAIKELLWIWQLKSNDVTELNKMGVHIWDQWKQEDGTIGHAYGFQLGKKNRSLNGEKVDQVDYLLHQLKNNPSSRRHITMLWNPDDLDAMALTPCVYETQWYVKQGKLHLEVRARSNDMALGNPFNVFQYNVLQRMIAQVTGYELGEYIFNIGDCHVYTRHIDNLKIQMEREQFEAPELWINPEVKDFYNFTVDDFKLINYKHGDKLLFEVAV.

141-142 (RR) contributes to the dUMP binding site. Cys-161 (nucleophile) is an active-site residue. DUMP is bound by residues 181–184 (RSND), Asn-192, and 222–224 (HVY). Asp-184 is a binding site for (6R)-5,10-methylene-5,6,7,8-tetrahydrofolate. Ala-278 lines the (6R)-5,10-methylene-5,6,7,8-tetrahydrofolate pocket.

This sequence belongs to the thymidylate synthase family. Homodimer.

It carries out the reaction dUMP + (6R)-5,10-methylene-5,6,7,8-tetrahydrofolate = 7,8-dihydrofolate + dTMP. It functions in the pathway pyrimidine metabolism; dTTP biosynthesis. Functionally, provides the sole de novo source of dTMP for DNA biosynthesis. The chain is Thymidylate synthase (thyP3) from Bacillus subtilis (Bacteriophage phi-3T).